Consider the following 295-residue polypeptide: Hepatic leukemia factor (295 aa).

The segment covering 36–52 (PEDAFSKEKDKGKKLDD) has biased composition (basic and acidic residues). Disordered regions lie at residues 36 to 76 (PEDA…TLPY) and 92 to 149 (LSEN…SPIR). In terms of domain architecture, bZIP spans 225–288 (DDKYWARRRK…GKCKNILAKY (64 aa)). The tract at residues 227–247 (KYWARRRKNNMAAKRSRDARR) is basic motif. The leucine-zipper stretch occupies residues 248–255 (LKENQIAI).

This sequence belongs to the bZIP family. PAR subfamily. In terms of assembly, binds DNA specifically as homodimer or heterodimer with other PAR factors.

The protein resides in the nucleus. This Mus musculus (Mouse) protein is Hepatic leukemia factor (Hlf).